A 401-amino-acid polypeptide reads, in one-letter code: ATP phosphoribosyltransferase regulatory subunit (401 aa).

Belongs to the class-II aminoacyl-tRNA synthetase family. HisZ subfamily. As to quaternary structure, heteromultimer composed of HisG and HisZ subunits.

The protein localises to the cytoplasm. Its pathway is amino-acid biosynthesis; L-histidine biosynthesis; L-histidine from 5-phospho-alpha-D-ribose 1-diphosphate: step 1/9. In terms of biological role, required for the first step of histidine biosynthesis. May allow the feedback regulation of ATP phosphoribosyltransferase activity by histidine. The protein is ATP phosphoribosyltransferase regulatory subunit of Cyanothece sp. (strain PCC 7425 / ATCC 29141).